The primary structure comprises 340 residues: tRNA N6-adenosine threonylcarbamoyltransferase (340 aa).

Fe cation is bound by residues His-111 and His-115. Substrate-binding positions include 133 to 137 (VVSGG), Asp-166, Gly-179, Asp-183, and Asn-273. Asp-301 is a Fe cation binding site.

Belongs to the KAE1 / TsaD family. Fe(2+) serves as cofactor.

It localises to the cytoplasm. It carries out the reaction L-threonylcarbamoyladenylate + adenosine(37) in tRNA = N(6)-L-threonylcarbamoyladenosine(37) in tRNA + AMP + H(+). In terms of biological role, required for the formation of a threonylcarbamoyl group on adenosine at position 37 (t(6)A37) in tRNAs that read codons beginning with adenine. Is involved in the transfer of the threonylcarbamoyl moiety of threonylcarbamoyl-AMP (TC-AMP) to the N6 group of A37, together with TsaE and TsaB. TsaD likely plays a direct catalytic role in this reaction. The protein is tRNA N6-adenosine threonylcarbamoyltransferase of Pelobacter propionicus (strain DSM 2379 / NBRC 103807 / OttBd1).